Consider the following 228-residue polypeptide: GrpE protein homolog, mitochondrial (228 aa).

Residues 46–57 (DEAKSEESKENN) are compositionally biased toward basic and acidic residues. Positions 46–66 (DEAKSEESKENNEDLTEEQSE) are disordered.

It belongs to the GrpE family. As to quaternary structure, component of the PAM complex, at least composed of SSC1 (mtHsp70), MGE1, TIM44, PAM16/TIM16, PAM17 and PAM18/TIM14. Interacts with SSQ1. The N-terminus is blocked.

The protein resides in the mitochondrion matrix. Functionally, essential component of the PAM complex, a complex required for the translocation of transit peptide-containing proteins from the inner membrane into the mitochondrial matrix in an ATP-dependent manner. Seems to control the nucleotide-dependent binding of SSC1 to substrate proteins and the association of SSC1 with TIM44. This is GrpE protein homolog, mitochondrial (MGE1) from Saccharomyces cerevisiae (strain ATCC 204508 / S288c) (Baker's yeast).